Consider the following 787-residue polypeptide: Probable basic-leucine zipper transcription factor J (787 aa).

The segment covering 18-90 (NSNIHNNTHN…NNTQNTNNGT (73 aa)) has biased composition (low complexity). 6 disordered regions span residues 18–95 (NSNI…LTPL), 153–173 (LNLS…NNNP), 186–306 (LQSQ…NNNT), 343–372 (DSLL…IQTS), 401–441 (LSSA…NNSN), and 473–507 (ASSE…DEDQ). 4 stretches are compositionally biased toward low complexity: residues 186 to 223 (LQSQ…SSPI), 235 to 258 (SSPI…STSP), 273 to 305 (NNNN…LNNN), and 351 to 366 (NNNN…NNNN). The segment covering 473–483 (ASSESAQSESS) has biased composition (low complexity). The region spanning 549–612 (ELKKQRRLVK…KALKKQLYSL (64 aa)) is the bZIP domain. Residues 551–603 (KKQRRLVKNREYASQSRSRRKIYVENIETKLQKTNQDCASIKSQLNSVKEENK) are basic motif. Residues 605–612 (LKKQLYSL) are leucine-zipper. Disordered regions lie at residues 723-747 (SNYI…VVST) and 763-787 (DKEV…SPLN). Over residues 763 to 778 (DKEVPQKCKDSSDLKC) the composition is skewed to basic and acidic residues.

It belongs to the bZIP family.

It localises to the nucleus. Functionally, probable transcriptional regulator. This is Probable basic-leucine zipper transcription factor J (bzpJ) from Dictyostelium discoideum (Social amoeba).